Here is a 359-residue protein sequence, read N- to C-terminus: Fructose-bisphosphate aldolase class 2 (359 aa).

Serine 50 lines the D-glyceraldehyde 3-phosphate pocket. Aspartate 83 (proton donor) is an active-site residue. Zn(2+) is bound by residues histidine 84, aspartate 105, glutamate 142, and histidine 198. Residue glycine 199 participates in dihydroxyacetone phosphate binding. Zn(2+) is bound at residue histidine 232. Residues 233 to 235 (GSS) and 275 to 278 (NIDT) each bind dihydroxyacetone phosphate.

It belongs to the class II fructose-bisphosphate aldolase family. It depends on Zn(2+) as a cofactor.

It catalyses the reaction beta-D-fructose 1,6-bisphosphate = D-glyceraldehyde 3-phosphate + dihydroxyacetone phosphate. The protein operates within carbohydrate degradation; glycolysis; D-glyceraldehyde 3-phosphate and glycerone phosphate from D-glucose: step 4/4. In terms of biological role, catalyzes the aldol condensation of dihydroxyacetone phosphate (DHAP or glycerone-phosphate) with glyceraldehyde 3-phosphate (G3P) to form fructose 1,6-bisphosphate (FBP) in gluconeogenesis and the reverse reaction in glycolysis. The protein is Fructose-bisphosphate aldolase class 2 (fbaA) of Synechocystis sp. (strain ATCC 27184 / PCC 6803 / Kazusa).